A 337-amino-acid polypeptide reads, in one-letter code: Serpentine receptor class beta-6 (337 aa).

A run of 7 helical transmembrane segments spans residues 20–40 (QFYT…LIIF), 62–82 (ILIS…IPFL), 98–118 (IFQN…LGIT), 138–158 (IGVF…YFFF), 183–203 (WLCY…YFLV), 234–254 (TFIS…TLII), and 273–293 (GVYI…CVIL).

Belongs to the nematode receptor-like protein srb family. Expressed in the ADL, ADF and ASH chemosensory neurons in the head and in the PHA and PHB chemosensory neurons in the tail. Low expression also observed in the egg-laying structures in the mid-body region.

The protein resides in the cell membrane. Mediates recognition and avoidance of Streptomyces species by detecting dodecanoic acid secreted by the bacteria. Also mediates avoidance of decanoic acid which is not secreted by Streptomyces species but this may represent an additional important avoidance response in the environment. The polypeptide is Serpentine receptor class beta-6 (srb-6) (Caenorhabditis elegans).